The following is a 73-amino-acid chain: Putative membrane protein insertion efficiency factor (73 aa).

The protein belongs to the UPF0161 family.

The protein resides in the cell inner membrane. Its function is as follows. Could be involved in insertion of integral membrane proteins into the membrane. The chain is Putative membrane protein insertion efficiency factor from Rickettsia bellii (strain OSU 85-389).